The sequence spans 184 residues: Glutathione-regulated potassium-efflux system ancillary protein KefG (184 aa).

This sequence belongs to the NAD(P)H dehydrogenase (quinone) family. KefG subfamily. Interacts with KefB.

It is found in the cell inner membrane. The catalysed reaction is a quinone + NADH + H(+) = a quinol + NAD(+). The enzyme catalyses a quinone + NADPH + H(+) = a quinol + NADP(+). In terms of biological role, regulatory subunit of a potassium efflux system that confers protection against electrophiles. Required for full activity of KefB. The polypeptide is Glutathione-regulated potassium-efflux system ancillary protein KefG (Escherichia coli O1:K1 / APEC).